The following is a 174-amino-acid chain: Amino-acid acetyltransferase (174 aa).

Positions 10 to 148 (PVVRRARTSD…VFDEMCRSYD (139 aa)) constitute an N-acetyltransferase domain.

It belongs to the acetyltransferase family. As to quaternary structure, homodimer and homotetramer.

It catalyses the reaction L-glutamate + acetyl-CoA = N-acetyl-L-glutamate + CoA + H(+). It participates in amino-acid biosynthesis; L-arginine biosynthesis; N(2)-acetyl-L-ornithine from L-glutamate: step 1/4. Its activity is regulated as follows. Inhibited by L-arginine. Its function is as follows. Catalyzes the conversion of L-glutamate to alpha-N-acetyl-L-glutamate. L-glutamine is a significantly better substrate compared to L-glutamate. The polypeptide is Amino-acid acetyltransferase (argA) (Mycobacterium tuberculosis (strain ATCC 25618 / H37Rv)).